Here is a 572-residue protein sequence, read N- to C-terminus: Sulfate adenylyltransferase (572 aa).

Residues 1 to 169 are N-terminal; sequence MANTPHGGVL…IQAINKLNHY (169 aa). The segment at 170-394 is catalytic; the sequence is DYVGLRYTPA…LRESHPPRAK (225 aa). Gln-197 is a binding site for sulfate. ATP contacts are provided by residues 197-200 and 291-294; these read QTRN and GRDH. Active-site residues include Thr-198, Arg-199, and Asn-200. Arg-199 is a sulfate binding site. Position 295 (Ala-295) interacts with sulfate. An ATP-binding site is contributed by Met-333. The segment at 395–572 is allosteric regulation domain; adenylyl-sulfate kinase-like; it reads QGFTIFLTGH…LLESQGFFGN (178 aa). 3'-phosphoadenylyl sulfate-binding positions include 434 to 437, Arg-451, 477 to 478, and Lys-515; these read ETVR and IA.

In the N-terminal section; belongs to the sulfate adenylyltransferase family. The protein in the C-terminal section; belongs to the APS kinase family. As to quaternary structure, homohexamer. Dimer of trimers.

Its subcellular location is the cytoplasm. It carries out the reaction sulfate + ATP + H(+) = adenosine 5'-phosphosulfate + diphosphate. It participates in sulfur metabolism; hydrogen sulfide biosynthesis; sulfite from sulfate: step 1/3. Its activity is regulated as follows. Allosterically inhibited by 3'-phosphoadenosine 5'-phosphosulfate (PAPS). Its function is as follows. Catalyzes the first intracellular reaction of sulfate assimilation, forming adenosine-5'-phosphosulfate (APS) from inorganic sulfate and ATP. Plays an important role in sulfate activation as a component of the biosynthesis pathway of sulfur-containing amino acids. This chain is Sulfate adenylyltransferase, found in Yarrowia lipolytica (strain CLIB 122 / E 150) (Yeast).